The sequence spans 295 residues: Glucose-1-phosphate thymidylyltransferase (295 aa).

Mg(2+) contacts are provided by D111 and D226.

Belongs to the glucose-1-phosphate thymidylyltransferase family. As to quaternary structure, homotetramer. The cofactor is Mg(2+).

The enzyme catalyses dTTP + alpha-D-glucose 1-phosphate + H(+) = dTDP-alpha-D-glucose + diphosphate. Its pathway is carbohydrate biosynthesis; dTDP-L-rhamnose biosynthesis. It functions in the pathway bacterial outer membrane biogenesis; LPS O-antigen biosynthesis. In terms of biological role, catalyzes the formation of dTDP-glucose, from dTTP and glucose 1-phosphate, as well as its pyrophosphorolysis. The polypeptide is Glucose-1-phosphate thymidylyltransferase (rmlA) (Xanthomonas campestris pv. campestris (strain B100)).